Consider the following 116-residue polypeptide: U11-theraphotoxin-Hhn1c (116 aa).

Residues 1-21 (MNTVRVTFLLVFVLAVSLGQA) form the signal peptide. The propeptide occupies 22–74 (DKDENRMEMQEKTEQGKSYLDFAENLLLQKLEELEAKLLEEDSEESRNSRQKR). Positions 61-83 (EEDSEESRNSRQKRCIGEGVPCD) are disordered. 3 disulfide bridges follow: Cys-75–Cys-90, Cys-82–Cys-95, and Cys-89–Cys-110.

The protein belongs to the neurotoxin 14 (magi-1) family. 01 (HNTX-16) subfamily. Expressed by the venom gland.

It is found in the secreted. In terms of biological role, probable ion channel inhibitor. The sequence is that of U11-theraphotoxin-Hhn1c from Cyriopagopus hainanus (Chinese bird spider).